A 113-amino-acid polypeptide reads, in one-letter code: UPF0122 protein LCA_0713 (113 aa).

It belongs to the UPF0122 family.

Functionally, might take part in the signal recognition particle (SRP) pathway. This is inferred from the conservation of its genetic proximity to ftsY/ffh. May be a regulatory protein. In Latilactobacillus sakei subsp. sakei (strain 23K) (Lactobacillus sakei subsp. sakei), this protein is UPF0122 protein LCA_0713.